Here is a 396-residue protein sequence, read N- to C-terminus: Putative cytochrome P450 YjiB (396 aa).

A heme-binding site is contributed by Cys349.

This sequence belongs to the cytochrome P450 family. The cofactor is heme.

In Bacillus subtilis (strain 168), this protein is Putative cytochrome P450 YjiB (yjiB).